The following is a 139-amino-acid chain: MDIISQLQEQVNTIAAITFNAFGTLQRDAPPVQLSPNYPEPPATTTVTDDATPFPEQPKQLSAGLVKAAKQFDALVAALPLSEGGEGAQLKRIAELQVENDLVGQELQKQLEAAEKELKQVQELFGQAADNCLNMKKPE.

A disordered region spans residues 28–58 (DAPPVQLSPNYPEPPATTTVTDDATPFPEQP). A compositionally biased stretch (low complexity) spans 43-54 (ATTTVTDDATPF). Residues 92 to 132 (RIAELQVENDLVGQELQKQLEAAEKELKQVQELFGQAADNC) adopt a coiled-coil conformation.

The protein belongs to the Mediator complex subunit 21 family. In terms of assembly, component of the Mediator complex. Interacts with HUB1.

The protein localises to the nucleus. Functionally, component of the Mediator complex, a coactivator involved in the regulated transcription of nearly all RNA polymerase II-dependent genes. Mediator functions as a bridge to convey information from gene-specific regulatory proteins to the basal RNA polymerase II transcription machinery. Mediator is recruited to promoters by direct interactions with regulatory proteins and serves as a scaffold for the assembly of a functional preinitiation complex with RNA polymerase II and the general transcription factors. Required for embryo development and defense against necrotrophic fungal pathogens. In Arabidopsis thaliana (Mouse-ear cress), this protein is Mediator of RNA polymerase II transcription subunit 21 (MED21).